Here is a 241-residue protein sequence, read N- to C-terminus: Large ribosomal subunit protein uL2 (241 aa).

Positions 1 to 12 are enriched in basic residues; that stretch reads MGKRLISQRRGR. Disordered stretches follow at residues 1–21 and 200–241; these read MGKR…RSAS and AVDH…GKRR.

It belongs to the universal ribosomal protein uL2 family. As to quaternary structure, part of the 50S ribosomal subunit. Forms a bridge to the 30S subunit in the 70S ribosome.

One of the primary rRNA binding proteins. Required for association of the 30S and 50S subunits to form the 70S ribosome, for tRNA binding and peptide bond formation. It has been suggested to have peptidyltransferase activity; this is somewhat controversial. Makes several contacts with the 16S rRNA in the 70S ribosome. The chain is Large ribosomal subunit protein uL2 from Methanothermobacter thermautotrophicus (strain ATCC 29096 / DSM 1053 / JCM 10044 / NBRC 100330 / Delta H) (Methanobacterium thermoautotrophicum).